We begin with the raw amino-acid sequence, 198 residues long: Ion-translocating oxidoreductase complex subunit B (198 aa).

Residues 1-28 (MIITTVYFILVAIAVLALIFGAILGFAS) are hydrophobic. The 4Fe-4S domain occupies 34–92 (EADPIVEKIDALLPQSQCGQCGYPGCKPYAEAIANGDDITKCIPGGQTVIVNIAELMGV). [4Fe-4S] cluster is bound by residues Cys51, Cys54, Cys59, Cys75, Cys115, Cys118, Cys121, Cys125, Cys145, Cys148, Cys151, and Cys155. 4Fe-4S ferredoxin-type domains follow at residues 106–135 (MVAF…GTNK) and 136–165 (AMHT…MIKV).

Belongs to the 4Fe4S bacterial-type ferredoxin family. RnfB subfamily. In terms of assembly, the complex is composed of six subunits: RnfA, RnfB, RnfC, RnfD, RnfE and RnfG. It depends on [4Fe-4S] cluster as a cofactor.

The protein resides in the cell inner membrane. In terms of biological role, part of a membrane-bound complex that couples electron transfer with translocation of ions across the membrane. This chain is Ion-translocating oxidoreductase complex subunit B, found in Pasteurella multocida (strain Pm70).